A 288-amino-acid chain; its full sequence is THO complex subunit 4D (288 aa).

The disordered stretch occupies residues 1 to 55 (MSGALNMTLDEIVKRGKTARSGGRGISRGRGRGRGGGGRGAGPARRGPLAVNARP). Position 2 is an N-acetylserine (serine 2). The RRM domain occupies 93–170 (TRLHVTNLDQ…RPMRLEILGG (78 aa)). The interval 201-288 (QGGGGRGRVR…SYHADAMNTS (88 aa)) is disordered. Over residues 232–260 (QGGGMRGGRGGFRARGRGNGGRGRGGGRG) the composition is skewed to gly residues. Positions 264–281 (KPVEKSAADLDKDLESYH) are enriched in basic and acidic residues.

The protein belongs to the ALYREF family. Interacts with PARP1. Interacts with EIF4A3.

Its subcellular location is the nucleus. The protein resides in the nucleoplasm. It is found in the nucleolus. Its function is as follows. Export adapter involved in nuclear export of spliced and unspliced mRNA. Plays a role in disease resistance. Mediates multiple defense responses triggered by NEP1, including stomatal closure, hypersensitive cell death (HCD) and defense-related gene expression. This is THO complex subunit 4D from Arabidopsis thaliana (Mouse-ear cress).